Here is a 366-residue protein sequence, read N- to C-terminus: uncharacterized protein (366 aa).

One can recognise a PINc domain in the interval 169 to 280 (ILDTSVIIDG…LNKVCELQKV (112 aa)). Asp250 is a Mg(2+) binding site. A TRAM domain is found at 295–356 (VVLPGEEMNV…LQTAAGRMIF (62 aa)).

Belongs to the ycf81 family. The protein in the central section; belongs to the PINc/VapC protein family. Mg(2+) is required as a cofactor.

An RNase. This is an uncharacterized protein from Bacillus subtilis (strain 168).